We begin with the raw amino-acid sequence, 448 residues long: Histidinol dehydrogenase (448 aa).

Positions 136, 197, and 220 each coordinate NAD(+). Residues S243, Q265, and H268 each coordinate substrate. Zn(2+)-binding residues include Q265 and H268. Residues E333 and H334 each act as proton acceptor in the active site. Substrate is bound by residues H334, D367, E421, and H426. Residue D367 coordinates Zn(2+). H426 serves as a coordination point for Zn(2+).

It belongs to the histidinol dehydrogenase family. Zn(2+) serves as cofactor.

It carries out the reaction L-histidinol + 2 NAD(+) + H2O = L-histidine + 2 NADH + 3 H(+). Its pathway is amino-acid biosynthesis; L-histidine biosynthesis; L-histidine from 5-phospho-alpha-D-ribose 1-diphosphate: step 9/9. In terms of biological role, catalyzes the sequential NAD-dependent oxidations of L-histidinol to L-histidinaldehyde and then to L-histidine. The chain is Histidinol dehydrogenase from Pseudomonas syringae pv. syringae (strain B728a).